We begin with the raw amino-acid sequence, 1259 residues long: Telomerase reverse transcriptase (1259 aa).

The Reverse transcriptase domain occupies 742–1067 (RGEPRKAVRH…SFMPWSGLLI (326 aa)). Mg(2+) is bound by residues Asp837, Asp999, and Asp1000.

The protein belongs to the reverse transcriptase family. Telomerase subfamily. As to quaternary structure, component of the telomerase ribonucleoprotein complex. In terms of tissue distribution, expressed in shoot apices and immature embryos.

Its subcellular location is the nucleus. It localises to the chromosome. The protein localises to the telomere. It catalyses the reaction DNA(n) + a 2'-deoxyribonucleoside 5'-triphosphate = DNA(n+1) + diphosphate. In terms of biological role, telomerase is a ribonucleoprotein enzyme essential for the replication of chromosome termini in most eukaryotes. It elongates telomeres. It is a reverse transcriptase that adds simple sequence repeats to chromosome ends by copying a template sequence within the RNA component of the enzyme. This chain is Telomerase reverse transcriptase (TERT), found in Oryza sativa subsp. japonica (Rice).